A 261-amino-acid polypeptide reads, in one-letter code: Kallikrein 1-related peptidase b3 (261 aa).

Residues 1–18 (MWFLILFLALSLGGIDAA) form the signal peptide. A propeptide spans 19–24 (PPVQSR) (activation peptide). Positions 25-107 (IVGGFKCEKN…HPGFNMSLMR (83 aa)) are segment B1. Residues 25–258 (IVGGFKCEKN…FTSWIKDTMA (234 aa)) enclose the Peptidase S1 domain. Intrachain disulfides connect Cys-31–Cys-173, Cys-50–Cys-66, Cys-152–Cys-219, Cys-184–Cys-198, and Cys-209–Cys-234. The Charge relay system role is filled by His-65. A glycan (N-linked (GlcNAc...) asparagine) is linked at Asn-102. Residues 112 to 164 (FLEYDYSNDLMLLRLSKPADITDTVKPITLPTEEPKLGSTCLASGWGSITPTK) are segment C. The segment at 112–261 (FLEYDYSNDL…WIKDTMAKNP (150 aa)) is segment A. The active-site Charge relay system is the Asp-120. Residues 165 to 261 (FQFTDDLYCV…WIKDTMAKNP (97 aa)) form a segment B2 region. Residue Ser-213 is the Charge relay system of the active site. His-231 and Glu-236 together coordinate Zn(2+).

This sequence belongs to the peptidase S1 family. Kallikrein subfamily. In terms of assembly, 7S nerve growth factor is composed of two alpha chains, a beta dimer composed of identical chains, and two gamma chains. The cofactor is Zn(2+).

The enzyme catalyses Preferential cleavage of Arg-|-Xaa bonds in small molecule substrates. Highly selective action to release kallidin (lysyl-bradykinin) from kininogen involves hydrolysis of Met-|-Xaa or Leu-|-Xaa.. Its function is as follows. 7S NGF alpha chain stabilizes the 7S complex. The beta dimer promotes neurite growth. The gamma chain is an arginine-specific protease; it may also have plasminogen activator activity, as well as mitogenic activity for chick embryo fibroblasts. In Mus musculus (Mouse), this protein is Kallikrein 1-related peptidase b3 (Klk1b3).